We begin with the raw amino-acid sequence, 354 residues long: Serum paraoxonase/lactonase 3 (354 aa).

Cysteine 42 and cysteine 352 are oxidised to a cystine. Asparagine 50 carries an N-linked (GlcNAc...) asparagine glycan. Glutamate 53 and aspartate 54 together coordinate Ca(2+). Catalysis depends on histidine 114, which acts as the Proton acceptor. Isoleucine 116 serves as a coordination point for Ca(2+). The residue at position 165 (serine 165) is a Phosphoserine. Ca(2+) is bound by residues asparagine 167, aspartate 168, asparagine 223, aspartate 268, and asparagine 269. N-linked (GlcNAc...) asparagine glycans are attached at residues asparagine 269 and asparagine 323.

It belongs to the paraoxonase family. As to quaternary structure, homodimer. Ca(2+) is required as a cofactor. Post-translationally, glycosylated. In terms of processing, the signal sequence is not cleaved.

The protein resides in the secreted. It is found in the extracellular space. It carries out the reaction a phenyl acetate + H2O = a phenol + acetate + H(+). It catalyses the reaction An aryl dialkyl phosphate + H2O = dialkyl phosphate + an aryl alcohol.. The catalysed reaction is an N-acyl-L-homoserine lactone + H2O = an N-acyl-L-homoserine + H(+). Its function is as follows. Has low activity towards the organophosphate paraxon and aromatic carboxylic acid esters. Rapidly hydrolyzes lactones such as statin prodrugs (e.g. lovastatin). Hydrolyzes aromatic lactones and 5- or 6-member ring lactones with aliphatic substituents but not simple lactones or those with polar substituents. This Mus musculus (Mouse) protein is Serum paraoxonase/lactonase 3 (Pon3).